A 124-amino-acid polypeptide reads, in one-letter code: CLAVATA3/ESR (CLE)-related protein 45 (124 aa).

Positions 1–20 (MLGSSTRSMFFLLVCIGLLA) are cleaved as a signal peptide. Asn-25 and Asn-96 each carry an N-linked (GlcNAc...) asparagine glycan. Residues 71–109 (LNKNRRVLEEVNKDKIKAEETQERKNKTEDSFKSSKRRV) are a coiled coil. Residues 87–103 (KAEETQERKNKTEDSFK) are compositionally biased toward basic and acidic residues. The interval 87–124 (KAEETQERKNKTEDSFKSSKRRVRRGSDPIHNKAQPFS) is disordered.

Belongs to the CLV3/ESR signal peptide family. In terms of assembly, binds to SKM1 present in the pollen grain, particularly under relatively high temperature (at 30 degrees Celsius). Interacts with BAM3, especially in roots. Expressed at low levels in flowers, especially in pistils. Present in vascular tissues. In roots, confined to protophloem and sieve element precursor cells.

The protein resides in the secreted. Its subcellular location is the extracellular space. Its function is as follows. Extracellular signal peptide that regulates cell fate. Represses root apical meristem maintenance. Represses protophloem differentiation in a BAM3-dependent manner. BRX, BAM3, and CLE45 act together to regulate the transition of protophloem cells from proliferation to differentiation, thus impinging on postembryonic growth capacity of the root meristem; this signaling pathway requires CRN and CLV2 and involves MAKR5 for its transduction/amplification. Triggers the accumulation of MAKR5 in developing sieve elements in a BAM3-dependent manner. Prevents, in a dose-dependent manner, auxin response in the root meristem thus leading in the repression of protophloem differentiation and periclinal sieve element precursor cell division. Promotes pollen tube growth prolongation in a SKM1 and SKM2-dependent manner, especially under relatively high temperature (at 30 degrees Celsius), thus conferring tolerance against high temperature probably through the maintenance of mitochondrial activity. Alleviates mitochondrial decay pollen tube in vitro culture. This Arabidopsis thaliana (Mouse-ear cress) protein is CLAVATA3/ESR (CLE)-related protein 45.